The following is a 1011-amino-acid chain: RAS protein activator like-3 (1011 aa).

The tract at residues 1 to 38 (MDPPSPSRTSQTQPTATSPLTSYRWHTGGGGEKAAGGF) is disordered. Residues 7 to 22 (SRTSQTQPTATSPLTS) show a composition bias toward low complexity. 2 positions are modified to phosphoserine: S18 and S51. Disordered regions lie at residues 52–136 (HQEP…PVWD), 151–197 (GGEE…GPNQ), and 209–230 (KEKK…GSRE). Basic residues predominate over residues 81–95 (SRLRLSKALWGRHKN). Acidic residues predominate over residues 100–117 (PDPEPEQEAPELEPEPEL). The segment covering 118–131 (EPPTPQIPEAPTPN) has biased composition (pro residues). Residues S164, S166, S167, and S170 each carry the phosphoserine modification. The segment covering 179–190 (RDPDRMPGKTEP) has biased composition (basic and acidic residues). The PH domain occupies 197–293 (QVHNVRGLLK…WIEDLRRQFQ (97 aa)). Phosphoserine is present on residues S224, S228, and S231. The residue at position 234 (T234) is a Phosphothreonine. The 121-residue stretch at 284–404 (WIEDLRRQFQ…APAAGLERWF (121 aa)) folds into the C2 domain. One can recognise a Ras-GAP domain in the interval 474–682 (GRAQALVTDL…PAMQCFLDQV (209 aa)). 2 disordered regions span residues 756–885 (QVHS…LGTH) and 987–1011 (LSPR…GDTT). 2 positions are modified to phosphoserine: S787 and S790. Basic and acidic residues predominate over residues 792-808 (RRSESWARPRPDEERPL). Polar residues-rich tracts occupy residues 871–882 (QMDQPQDRNQAL) and 987–999 (LSPR…SQPQ). Residues 888–988 (VNKLAELQCE…RDAVQSLQLS (101 aa)) are a coiled coil. S988 is subject to Phosphoserine.

In terms of tissue distribution, predominantly expressed in cells of hematopoietic lineages.

The protein resides in the cytoplasm. It localises to the cell cortex. Its function is as follows. Functions as a Ras GTPase-activating protein. Plays an important role in the expansion and functions of natural killer T (NKT) cells in the liver by negatively regulating RAS activity and the down-stream ERK signaling pathway. This is RAS protein activator like-3 (RASAL3) from Homo sapiens (Human).